The sequence spans 119 residues: Large ribosomal subunit protein eL8 (119 aa).

This sequence belongs to the eukaryotic ribosomal protein eL8 family. As to quaternary structure, part of the 50S ribosomal subunit. Probably part of the RNase P complex.

The protein resides in the cytoplasm. In terms of biological role, multifunctional RNA-binding protein that recognizes the K-turn motif in ribosomal RNA, the RNA component of RNase P, box H/ACA, box C/D and box C'/D' sRNAs. In Archaeoglobus fulgidus (strain ATCC 49558 / DSM 4304 / JCM 9628 / NBRC 100126 / VC-16), this protein is Large ribosomal subunit protein eL8.